Reading from the N-terminus, the 1097-residue chain is DNA-directed RNA polymerase subunit beta (1097 aa).

Residues Gln1072 to Asp1097 are disordered.

The protein belongs to the RNA polymerase beta chain family. In cyanobacteria the RNAP catalytic core is composed of 2 alpha, 1 beta, 1 beta', 1 gamma and 1 omega subunit. When a sigma factor is associated with the core the holoenzyme is formed, which can initiate transcription.

The catalysed reaction is RNA(n) + a ribonucleoside 5'-triphosphate = RNA(n+1) + diphosphate. In terms of biological role, DNA-dependent RNA polymerase catalyzes the transcription of DNA into RNA using the four ribonucleoside triphosphates as substrates. This is DNA-directed RNA polymerase subunit beta from Prochlorococcus marinus (strain MIT 9303).